Here is a 204-residue protein sequence, read N- to C-terminus: Guanylate kinase (204 aa).

Positions 5–184 constitute a Guanylate kinase-like domain; it reads GLLLVLSGPS…AVDHIKAIVD (180 aa). Residue 12 to 19 coordinates ATP; it reads GPSGVGKG.

This sequence belongs to the guanylate kinase family.

The protein resides in the cytoplasm. It catalyses the reaction GMP + ATP = GDP + ADP. Essential for recycling GMP and indirectly, cGMP. In Lactobacillus acidophilus (strain ATCC 700396 / NCK56 / N2 / NCFM), this protein is Guanylate kinase.